We begin with the raw amino-acid sequence, 458 residues long: Phenylalanine-specific permease (458 aa).

Residues 1–27 (MKNASTVSEDTASNQEPTLHRGLHNRH) lie on the Cytoplasmic side of the membrane. The chain crosses the membrane as a helical span at residues 28 to 48 (IQLIALGGAIGTGLFLGIGPA). At 49–50 (IQ) the chain is on the periplasmic side. A helical transmembrane segment spans residues 51–71 (MAGPAVLLGYGVAGIIAFLIM). The Cytoplasmic portion of the chain corresponds to 72-105 (RQLGEMVVEEPVSGSFAHFAYKYWGPFAGFLSGW). The chain crosses the membrane as a helical span at residues 106–126 (NYWVMFVLVGMAELTAAGIYM). Residues 127 to 132 (QYWFPD) are Periplasmic-facing. Residues 133 to 153 (VPTWIWAAAFFIIINAVNLVN) traverse the membrane as a helical segment. The Cytoplasmic segment spans residues 154–160 (VRLYGET). Residues 161–181 (EFWFALIKVLAIIGMIGFGLW) traverse the membrane as a helical segment. The Periplasmic segment spans residues 182–196 (LLFSGHGGEKASIDN). A helical membrane pass occupies residues 197–217 (LWRYGGFFATGWNGLILSLAV). The Cytoplasmic segment spans residues 218–250 (IMFSFGGLELIGITAAEARDPEKSIPKAVNQVV). Residues 251–271 (YRILLFYIGSLVVLLALYPWV) form a helical membrane-spanning segment. Topologically, residues 272–288 (EVKSNSSPFVMIFHNLD) are periplasmic. A helical transmembrane segment spans residues 289-309 (SNVVASALNFVILVASLSVYN). The Cytoplasmic segment spans residues 310–341 (SGVYSNSRMLFGLSVQGNAPKFLTRVSRRGVP). Residues 342-362 (INSLMLSGAITSLVVLINYLL) traverse the membrane as a helical segment. The Periplasmic segment spans residues 363–367 (PQKAF). Residues 368 to 388 (GLLMALVVATLLLNWIMICLA) traverse the membrane as a helical segment. Residues 389 to 411 (HLRFRAAMRRQGRETQFKALLYP) are Cytoplasmic-facing. The helical transmembrane segment at 412–432 (FGNYLCIAFLGMILLLMCTMD) threads the bilayer. The Periplasmic portion of the chain corresponds to 433–434 (DM). The chain crosses the membrane as a helical span at residues 435-455 (RLSAILLPVWIVFLFMAFKTL). Residues 456–458 (RRK) are Cytoplasmic-facing.

It belongs to the amino acid-polyamine-organocation (APC) superfamily. Amino acid transporter (AAT) (TC 2.A.3.1) family.

Its subcellular location is the cell inner membrane. It catalyses the reaction L-phenylalanine(in) + H(+)(in) = L-phenylalanine(out) + H(+)(out). In terms of biological role, permease that is involved in the active transport across the cytoplasmic membrane of phenylalanine. Can also transport tyrosine, but not tryptophan. The chain is Phenylalanine-specific permease from Escherichia coli (strain K12).